Here is a 375-residue protein sequence, read N- to C-terminus: Probable protein-glutamate methylesterase BB_0415 (375 aa).

Positions 6 to 120 constitute a Response regulatory domain; it reads SVLIIEYFAV…SHEIKKEQII (115 aa). A CheB-type methylesterase domain is found at 183 to 375; that stretch reads KLRKFDIIAI…KLLKAILINS (193 aa). Residues Ser-195, His-221, and Asp-317 contribute to the active site.

The enzyme catalyses [protein]-L-glutamate 5-O-methyl ester + H2O = L-glutamyl-[protein] + methanol + H(+). The chain is Probable protein-glutamate methylesterase BB_0415 from Borreliella burgdorferi (strain ATCC 35210 / DSM 4680 / CIP 102532 / B31) (Borrelia burgdorferi).